Consider the following 582-residue polypeptide: Sodium-dependent low-affinity dicarboxylate transporter 1 (582 aa).

The next 12 membrane-spanning stretches (helical) occupy residues 17 to 37 (SFVI…VGDS), 59 to 79 (ALPL…FGIM), 87 to 107 (AYLP…LAVE), 130 to 150 (VMAG…NTAT), 224 to 244 (LMLS…TGTA), 271 to 291 (IFAF…LYLL), 317 to 337 (FSFA…LWIL), 353 to 373 (EFVS…TLPE), 401 to 421 (FPWS…GVKE), 455 to 475 (TNVC…AELA), 482 to 502 (PLNF…LPVA), and 527 to 547 (VTLG…GFVF).

Belongs to the SLC13A/DASS transporter (TC 2.A.47) family. NADC subfamily. In terms of tissue distribution, nad-1 and nad-2 are coexpressed in the intestinal tract from early larvae to adults, expression is from the pharynx through to the anus. Expression level is significantly greater in the anterior half of the intestine than in the posterior half.

The protein localises to the membrane. In terms of biological role, low affinity sodium-dicarboxylate cotransporter that accepts a range of tricarboxylic acid-cycle intermediates with 4-5 carbon atoms. There is no interaction with monocarboxylates. The protein is Sodium-dependent low-affinity dicarboxylate transporter 1 (nac-1) of Caenorhabditis elegans.